The primary structure comprises 1220 residues: Plasma membrane calcium-transporting ATPase 1 (1220 aa).

Gly-2 is subject to N-acetylglycine. The Cytoplasmic segment spans residues 2 to 105 (GDMANNSVVY…KTFLQLVWEA (104 aa)). Phosphoserine occurs at positions 8 and 17. The chain crosses the membrane as a helical span at residues 106–126 (LQDVTLIILEIAAIVSLGLSF). Over 127–154 (YQPPEGDNALCGEVSVGEEEGEGETGWI) the chain is Extracellular. The chain crosses the membrane as a helical span at residues 155-175 (EGAAILLSVVCVVLVTAFNDW). Topologically, residues 176 to 366 (SKEKQFRGLQ…KEKSVLQGKL (191 aa)) are cytoplasmic. Positions 297 to 356 (EEEKKDEKKKEKKNKKQDGAIENRNKAKAQDGEPMEMQPLKSEEGGDGDEKDKKKANLPK) are disordered. Composition is skewed to basic and acidic residues over residues 312–327 (KQDG…KAQD) and 337–356 (KSEE…NLPK). Residue Ser-338 is modified to Phosphoserine. The helical transmembrane segment at 367–386 (TKLAVQIGKAGLLMSAITVI) threads the bilayer. Residues 387–418 (ILVLYFLIDTFWVQKRPWLAECTPIYIQYFVK) are Extracellular-facing. The chain crosses the membrane as a helical span at residues 419 to 439 (FFIIGVTVLVVAVPEGLPLPV). At 440 to 855 (TISLAYSVNE…RNVYDSISKF (416 aa)) the chain is on the cytoplasmic side. The active-site 4-aspartylphosphate intermediate is Asp-475. Mg(2+)-binding residues include Asp-475, Thr-477, and Asp-797. A helical transmembrane segment spans residues 856 to 876 (LQFQLTVNVVAVIVAFTGACI). Residues 877 to 882 (TQDSPL) are Extracellular-facing. The chain crosses the membrane as a helical span at residues 883–903 (KAVQMLWVNLIMDTLASLALA). Over 904–927 (TEPPTESLLLGKPYGRNKPLISRT) the chain is Cytoplasmic. The chain crosses the membrane as a helical span at residues 928–948 (MMKNILGHAFYQLVVVFTLLL). Topologically, residues 949–971 (AGEKFFDIDSGRNAPLHAPPSEH) are extracellular. The chain crosses the membrane as a helical span at residues 972-991 (YTIVFNIFVLMQLFNEINAR). Topologically, residues 992 to 1005 (KIHGERNVFEGIFN) are cytoplasmic. Residues 1006-1027 (NAIFCTIVLGTFVVQIIIVQFA) traverse the membrane as a helical segment. Residues 1028 to 1039 (GKPFSCSELSVE) are Extracellular-facing. Residues 1040 to 1060 (QWLWSIFLGMGTLLWGQLIST) form a helical membrane-spanning segment. The Cytoplasmic portion of the chain corresponds to 1061–1220 (IPTSRLKFQK…SPLHSLETSL (160 aa)). Residues 1100-1117 (LRRWQILWFRGLNRIQTQ) form a calmodulin-binding subdomain A region. Thr-1116 is subject to Phosphothreonine; by PKC. The segment at 1118 to 1220 (IRVVNAFRSS…SPLHSLETSL (103 aa)) is required for basolateral membrane targeting. Phosphoserine occurs at positions 1140 and 1155. The tract at residues 1160 to 1220 (PLIDDTDAED…SPLHSLETSL (61 aa)) is disordered. Thr-1165 bears the Phosphothreonine mark. A Phosphoserine; by PKA modification is found at Ser-1177. Phosphoserine is present on residues Ser-1178 and Ser-1182. Polar residues predominate over residues 1200–1220 (MNKSATSSSPGSPLHSLETSL).

This sequence belongs to the cation transport ATPase (P-type) (TC 3.A.3) family. Type IIB subfamily. In terms of assembly, monomer. Dimer. Oligomer. Calmodulin binding. Interacts with PDZD11. Interacts with SLC35G1 and STIM1. Interacts with YWHAE; interacts with the monomeric and dimeric forms of the YWHAE but prefer the monomer form; this interaction inhibits calcium-transporting ATPase activity. Interacts with NPTN; this interaction stabilizes ATP2B1 and increases ATPase activity; this interaction controls T cell calcium homeostasis following T cell activation. Interacts with EPB41; regulates small intestinal calcium absorption through regulation of membrane expression of ATP2B1. Isoform B is ubiquitously expressed and is the most predominant isoform. Isoform C is expressed at much lower levels in all tissues tested, but liver, while isoform A is found only in aorta, brain and stomach.

It is found in the cell membrane. The protein localises to the basolateral cell membrane. The protein resides in the synapse. Its subcellular location is the presynaptic cell membrane. It localises to the cytoplasmic vesicle. It is found in the secretory vesicle. The protein localises to the synaptic vesicle membrane. The catalysed reaction is Ca(2+)(in) + ATP + H2O = Ca(2+)(out) + ADP + phosphate + H(+). Its function is as follows. Catalyzes the hydrolysis of ATP coupled with the transport of calcium from the cytoplasm to the extracellular space thereby maintaining intracellular calcium homeostasis. Plays a role in blood pressure regulation through regulation of intracellular calcium concentration and nitric oxide production leading to regulation of vascular smooth muscle cells vasoconstriction. Positively regulates bone mineralization through absorption of calcium from the intestine. Plays dual roles in osteoclast differentiation and survival by regulating RANKL-induced calcium oscillations in preosteoclasts and mediating calcium extrusion in mature osteoclasts. Regulates insulin sensitivity through calcium/calmodulin signaling pathway by regulating AKT1 activation and NOS3 activation in endothelial cells. May play a role in synaptic transmission by modulating calcium and proton dynamics at the synaptic vesicles. This chain is Plasma membrane calcium-transporting ATPase 1, found in Oryctolagus cuniculus (Rabbit).